A 602-amino-acid chain; its full sequence is T-box transcription factor TBX15 (602 aa).

Positions 46-84 (ALSPAGPLGDTEDAAAHGLEPHPDSEQSTGSDSEVLTER) are disordered. The span at 71–84 (EQSTGSDSEVLTER) shows a compositional bias: polar residues. The segment at residues 122-304 (LWKRFHDIGT…RNPFAKGFRD (183 aa)) is a DNA-binding region (T-box). Residue T330 is modified to Phosphothreonine. Disordered stretches follow at residues 338–369 (QKQQGGSTGTSPTTSSTGTPSPSASSHLLSPS) and 425–447 (QSGTTSATQPSETFMPQRTPSLI). Positions 346–369 (GTSPTTSSTGTPSPSASSHLLSPS) are enriched in low complexity. Over residues 425–446 (QSGTTSATQPSETFMPQRTPSL) the composition is skewed to polar residues.

As to quaternary structure, can form a heterodimer with TBX18.

It is found in the nucleus. Probable transcriptional regulator involved in the development of the skeleton of the limb, vertebral column and head. Acts by controlling the number of mesenchymal precursor cells and chondrocytes. The chain is T-box transcription factor TBX15 (TBX15) from Homo sapiens (Human).